A 100-amino-acid chain; its full sequence is Trp operon repressor homolog (100 aa).

Residues 59–82 (QRQISQMLGVGIATITRGSNELKS) mediate DNA binding. The span at 78 to 93 (NELKSKSDTDKDKLKT) shows a compositional bias: basic and acidic residues. A disordered region spans residues 78–100 (NELKSKSDTDKDKLKTLLEQGAQ).

Belongs to the TrpR family. As to quaternary structure, homodimer.

The protein resides in the cytoplasm. This protein is an aporepressor. When complexed with L-tryptophan it binds the operator region of the trp operon and prevents the initiation of transcription. This is Trp operon repressor homolog from Vibrio campbellii (strain ATCC BAA-1116).